The chain runs to 706 residues: Polyribonucleotide nucleotidyltransferase (706 aa).

Positions 487 and 493 each coordinate Mg(2+). The 60-residue stretch at 554-613 folds into the KH domain; that stretch reads PRIHTMKISSDKIKDVIGKGGAVIRALCEETGTTIEIEDDGTIKIAATEGAAAKEAIRRI. Residues 623–691 enclose the S1 motif domain; it reads GRIYQGKVAR…RQGRVRLSMK (69 aa).

Belongs to the polyribonucleotide nucleotidyltransferase family. Component of the RNA degradosome, which is a multiprotein complex involved in RNA processing and mRNA degradation. Mg(2+) serves as cofactor.

Its subcellular location is the cytoplasm. The catalysed reaction is RNA(n+1) + phosphate = RNA(n) + a ribonucleoside 5'-diphosphate. Its function is as follows. Involved in mRNA degradation. Catalyzes the phosphorolysis of single-stranded polyribonucleotides processively in the 3'- to 5'-direction. The protein is Polyribonucleotide nucleotidyltransferase of Vibrio atlanticus (strain LGP32) (Vibrio splendidus (strain Mel32)).